Consider the following 407-residue polypeptide: 1-deoxy-D-xylulose 5-phosphate reductoisomerase (407 aa).

Residues Thr-25, Gly-26, Ser-27, Ile-28, Asn-53, and Asn-136 each coordinate NADPH. Lys-137 serves as a coordination point for 1-deoxy-D-xylulose 5-phosphate. NADPH is bound at residue Glu-138. Asp-162 serves as a coordination point for Mn(2+). Positions 163, 164, 188, and 211 each coordinate 1-deoxy-D-xylulose 5-phosphate. A Mn(2+)-binding site is contributed by Glu-164. Gly-217 is a binding site for NADPH. Residues Ser-224, Asn-229, Lys-230, and Glu-233 each coordinate 1-deoxy-D-xylulose 5-phosphate. Glu-233 contributes to the Mn(2+) binding site.

This sequence belongs to the DXR family. It depends on Mg(2+) as a cofactor. The cofactor is Mn(2+).

The enzyme catalyses 2-C-methyl-D-erythritol 4-phosphate + NADP(+) = 1-deoxy-D-xylulose 5-phosphate + NADPH + H(+). The protein operates within isoprenoid biosynthesis; isopentenyl diphosphate biosynthesis via DXP pathway; isopentenyl diphosphate from 1-deoxy-D-xylulose 5-phosphate: step 1/6. Catalyzes the NADPH-dependent rearrangement and reduction of 1-deoxy-D-xylulose-5-phosphate (DXP) to 2-C-methyl-D-erythritol 4-phosphate (MEP). The protein is 1-deoxy-D-xylulose 5-phosphate reductoisomerase of Afipia carboxidovorans (strain ATCC 49405 / DSM 1227 / KCTC 32145 / OM5) (Oligotropha carboxidovorans).